The chain runs to 226 residues: AN1-type zinc finger protein 3 homolog (226 aa).

An A20-type zinc finger spans residues 12-44 (PSLPPRCPCGFWGSSKTMNLCSKCFADFQKKQP). Residues C18, C20, C32, and C35 each contribute to the Zn(2+) site. A disordered region spans residues 42–149 (KQPDEDTAPS…DRPDNSSRSK (108 aa)). 3 stretches are compositionally biased toward polar residues: residues 49–59 (APSTSSSQSDL), 67–92 (DNGNTSIPTPTVNPTQQLPTELNVDS), and 105–114 (AHVSLTTPSK). Over residues 134–146 (RLLDSGDRPDNSS) the composition is skewed to basic and acidic residues. The segment at 150–199 (QKSRRRCFRCQIKLELVQQELGSCRCGYVFCMLHRLPEQHDCTFDHMGRG) adopts an AN1-type zinc-finger fold. Zn(2+) contacts are provided by C156, C159, C173, C175, C180, H183, H189, and C191.

The protein is AN1-type zinc finger protein 3 homolog (zfand3) of Xenopus laevis (African clawed frog).